We begin with the raw amino-acid sequence, 509 residues long: ATP synthase subunit alpha (509 aa).

An ATP-binding site is contributed by 169–176; that stretch reads GDRQTGKT.

This sequence belongs to the ATPase alpha/beta chains family. F-type ATPases have 2 components, CF(1) - the catalytic core - and CF(0) - the membrane proton channel. CF(1) has five subunits: alpha(3), beta(3), gamma(1), delta(1), epsilon(1). CF(0) has three main subunits: a(1), b(2) and c(9-12). The alpha and beta chains form an alternating ring which encloses part of the gamma chain. CF(1) is attached to CF(0) by a central stalk formed by the gamma and epsilon chains, while a peripheral stalk is formed by the delta and b chains.

Its subcellular location is the cell inner membrane. The enzyme catalyses ATP + H2O + 4 H(+)(in) = ADP + phosphate + 5 H(+)(out). Its function is as follows. Produces ATP from ADP in the presence of a proton gradient across the membrane. The alpha chain is a regulatory subunit. The sequence is that of ATP synthase subunit alpha from Brucella suis biovar 1 (strain 1330).